The following is a 279-amino-acid chain: MHPDAQLKTALKNGFDPKLLYKEPLTTVKEPVCSILEKHSKVPVDKVVSHVNEVRDRAFAVFPYACIGQFSFVELSIADSPCYREMLERTKQGHKLLDLGCAFGQELRQLIYDGTPPTNLYGSDIQQDFLNLGYELFLDRAILPDSQLIAADVLDKQSALFERLAGELNIVYISLFLHVFDFEKQITVAQNVLDLLKAEPGSMIVCRVTACRDQEVLAATQERMPYYYHDLASWNRLWEEVKKQTGVKLSVESWEQPDELVKKHPLPGIYILGSSIRRL.

Residues 124–125 (DI) and 152–153 (DV) contribute to the S-adenosyl-L-methionine site.

The protein belongs to the class I-like SAM-binding methyltransferase superfamily. In terms of assembly, homodimer.

The protein operates within secondary metabolite biosynthesis; terpenoid biosynthesis. Its function is as follows. Methyltransferase; part of the gene cluster A that mediates the biosynthesis of the fungal meroterpenoid acetoxydehydroaustin. The first step of the pathway is the synthesis of 3,5-dimethylorsellinic acid by the polyketide synthase ausA. 3,5-dimethylorsellinic acid is then prenylated by the polyprenyl transferase ausN. Further epoxidation by the FAD-dependent monooxygenase ausM and cyclization by the probable terpene cyclase ausL lead to the formation of protoaustinoid A. Protoaustinoid A is then oxidized to spiro-lactone preaustinoid A3 by the combined action of the FAD-binding monooxygenases ausB and ausC, and the dioxygenase ausE. Acid-catalyzed keto-rearrangement and ring contraction of the tetraketide portion of preaustinoid A3 by ausJ lead to the formation of preaustinoid A4. The aldo-keto reductase ausK, with the help of ausH, is involved in the next step by transforming preaustinoid A4 into isoaustinone which is in turn hydroxylated by the P450 monooxygenase ausI to form austinolide. The cytochrome P450 monooxygenase ausG then modifies austinolide to austinol. Austinol is further acetylated to austin by the O-acetyltransferase ausP, which spontaneously changes to dehydroaustin. The cytochrome P450 monooxygenase then converts dehydroaustin is into 7-dehydrodehydroaustin. The hydroxylation catalyzed by ausR permits the second O-acetyltransferase ausQ to add an additional acetyl group to the molecule, leading to the formation of acetoxydehydroaustin. Due to genetic rearrangements of the clusters and the subsequent loss of some enzymes, the end product of the Penicillium brasilianum austinoid biosynthesis clusters is acetoxydehydroaustin. This chain is Methyltransferase ausD, found in Penicillium brasilianum.